We begin with the raw amino-acid sequence, 117 residues long: Immunoglobulin heavy variable 1-24 (117 aa).

The first 19 residues, 1–19 (MDCTWRILFLVAAATGTHA), serve as a signal peptide directing secretion. The interval 20–44 (QVQLVQSGAEVKKPGASVKVSCKVS) is framework-1. The 98-residue stretch at 20–117 (QVQLVQSGAE…EDTAVYYCAT (98 aa)) folds into the Ig-like domain. Cys-41 and Cys-115 are disulfide-bonded. The tract at residues 45–52 (GYTLTELS) is complementarity-determining-1. The segment at 53 to 69 (MHWVRQAPGKGLEWMGG) is framework-2. The segment at 70 to 77 (FDPEDGET) is complementarity-determining-2. The tract at residues 78-115 (IYAQKFQGRVTMTEDTSTDTAYMELSSLRSEDTAVYYC) is framework-3. Residues 116–117 (AT) are complementarity-determining-3.

As to quaternary structure, immunoglobulins are composed of two identical heavy chains and two identical light chains; disulfide-linked.

It localises to the secreted. Its subcellular location is the cell membrane. V region of the variable domain of immunoglobulin heavy chains that participates in the antigen recognition. Immunoglobulins, also known as antibodies, are membrane-bound or secreted glycoproteins produced by B lymphocytes. In the recognition phase of humoral immunity, the membrane-bound immunoglobulins serve as receptors which, upon binding of a specific antigen, trigger the clonal expansion and differentiation of B lymphocytes into immunoglobulins-secreting plasma cells. Secreted immunoglobulins mediate the effector phase of humoral immunity, which results in the elimination of bound antigens. The antigen binding site is formed by the variable domain of one heavy chain, together with that of its associated light chain. Thus, each immunoglobulin has two antigen binding sites with remarkable affinity for a particular antigen. The variable domains are assembled by a process called V-(D)-J rearrangement and can then be subjected to somatic hypermutations which, after exposure to antigen and selection, allow affinity maturation for a particular antigen. The sequence is that of Immunoglobulin heavy variable 1-24 from Homo sapiens (Human).